The sequence spans 877 residues: DNA polymerase I (877 aa).

In terms of domain architecture, 5'-3' exonuclease spans 180-270 (TPAQFIDLKA…EIGLDDTLLK (91 aa)). In terms of domain architecture, 3'-5' exonuclease spans 308–468 (DEIDFEIVTD…AKEKMMAELL (161 aa)).

Belongs to the DNA polymerase type-A family. In terms of assembly, single-chain monomer with multiple functions.

The catalysed reaction is DNA(n) + a 2'-deoxyribonucleoside 5'-triphosphate = DNA(n+1) + diphosphate. In addition to polymerase activity, this DNA polymerase exhibits 3'-5' and 5'-3' exonuclease activity. The protein is DNA polymerase I (polA) of Lactococcus lactis subsp. lactis (strain IL1403) (Streptococcus lactis).